The sequence spans 104 residues: Transcription initiation factor IIA subunit 2 (104 aa).

This sequence belongs to the TFIIA subunit 2 family. In terms of assembly, TFIIA is a heterodimer of the large unprocessed subunit 1 and a small subunit gamma.

Its subcellular location is the nucleus. In terms of biological role, TFIIA is a component of the transcription machinery of RNA polymerase II and plays an important role in transcriptional activation. TFIIA in a complex with TBP mediates transcriptional activity. This is Transcription initiation factor IIA subunit 2 from Schistosoma mansoni (Blood fluke).